A 528-amino-acid polypeptide reads, in one-letter code: GTPase Der (528 aa).

2 stretches are compositionally biased toward acidic residues: residues 1-12 and 30-62; these read MDVEGAFADEEE and GYDDDFAPDDSDEDEDDDDYEFDEDDFAAPDFG. The interval 1-62 is disordered; sequence MDVEGAFADE…EDDFAAPDFG (62 aa). 2 EngA-type G domains span residues 90–253 and 263–436; these read CTVA…PEEP and RRVA…ENWD. Residues 96–103, 143–147, 205–208, 269–276, 316–320, and 381–384 contribute to the GTP site; these read GRPNVGKS, DTGGW, NKFD, GKPNVGKS, DTAGL, and NKWD. The KH-like domain maps to 437–519; sequence RRVSTGQLNN…PIRIAVRVRE (83 aa).

This sequence belongs to the TRAFAC class TrmE-Era-EngA-EngB-Septin-like GTPase superfamily. EngA (Der) GTPase family. As to quaternary structure, associates with the 50S ribosomal subunit.

GTPase that plays an essential role in the late steps of ribosome biogenesis. The chain is GTPase Der from Corynebacterium efficiens (strain DSM 44549 / YS-314 / AJ 12310 / JCM 11189 / NBRC 100395).